The sequence spans 59 residues: Sec-independent protein translocase protein TatA (59 aa).

A helical transmembrane segment spans residues 1–21 (MGRLGLTEILVIVGIVILLFG).

The protein belongs to the TatA/E family. As to quaternary structure, forms a complex with TatC.

The protein localises to the cell inner membrane. Functionally, part of the twin-arginine translocation (Tat) system that transports large folded proteins containing a characteristic twin-arginine motif in their signal peptide across membranes. TatA could form the protein-conducting channel of the Tat system. The protein is Sec-independent protein translocase protein TatA of Flavobacterium johnsoniae (strain ATCC 17061 / DSM 2064 / JCM 8514 / BCRC 14874 / CCUG 350202 / NBRC 14942 / NCIMB 11054 / UW101) (Cytophaga johnsonae).